A 200-amino-acid chain; its full sequence is Holliday junction resolvase RecU (200 aa).

The disordered stretch occupies residues 1–25 (MTIRYPNGKRYNQASQPHKTPIKKH). Positions 85, 87, 100, and 119 each coordinate Mg(2+).

It belongs to the RecU family. Mg(2+) is required as a cofactor.

Its subcellular location is the cytoplasm. The catalysed reaction is Endonucleolytic cleavage at a junction such as a reciprocal single-stranded crossover between two homologous DNA duplexes (Holliday junction).. In terms of biological role, endonuclease that resolves Holliday junction intermediates in genetic recombination. Cleaves mobile four-strand junctions by introducing symmetrical nicks in paired strands. Promotes annealing of linear ssDNA with homologous dsDNA. Required for DNA repair, homologous recombination and chromosome segregation. The sequence is that of Holliday junction resolvase RecU from Bacillus thuringiensis (strain Al Hakam).